The sequence spans 458 residues: Phosphoglucosamine mutase (458 aa).

The active-site Phosphoserine intermediate is the Ser108. Residues Ser108, Asp247, Asp249, and Asp251 each coordinate Mg(2+). Residue Ser108 is modified to Phosphoserine.

This sequence belongs to the phosphohexose mutase family. Requires Mg(2+) as cofactor. In terms of processing, activated by phosphorylation.

The catalysed reaction is alpha-D-glucosamine 1-phosphate = D-glucosamine 6-phosphate. Catalyzes the conversion of glucosamine-6-phosphate to glucosamine-1-phosphate. This Nitrosomonas europaea (strain ATCC 19718 / CIP 103999 / KCTC 2705 / NBRC 14298) protein is Phosphoglucosamine mutase.